A 95-amino-acid chain; its full sequence is Co-chaperonin GroES (95 aa).

The protein belongs to the GroES chaperonin family. As to quaternary structure, heptamer of 7 subunits arranged in a ring. Interacts with the chaperonin GroEL.

It is found in the cytoplasm. Its function is as follows. Together with the chaperonin GroEL, plays an essential role in assisting protein folding. The GroEL-GroES system forms a nano-cage that allows encapsulation of the non-native substrate proteins and provides a physical environment optimized to promote and accelerate protein folding. GroES binds to the apical surface of the GroEL ring, thereby capping the opening of the GroEL channel. In Syntrophotalea carbinolica (strain DSM 2380 / NBRC 103641 / GraBd1) (Pelobacter carbinolicus), this protein is Co-chaperonin GroES.